The primary structure comprises 366 residues: Glucan organizing enzyme 1 (366 aa).

At 1-24 the chain is on the extracellular side; it reads MLPLWARGGKPIVIPLPQKRHITL. Residues 25 to 45 form a helical membrane-spanning segment; sequence PALPILLLLLGTGFLLHSLFF. Topologically, residues 46 to 366 are cytoplasmic; sequence PPPPPHPPGK…ETYKKWKRGH (321 aa).

This sequence belongs to the glycosyltransferase 32 family.

It localises to the cell membrane. Its function is as follows. Plays a role in the localization of glycogen rosettes to the plasma membrane. Required for correct cell wall organization and may facilitate the connection between beta-1,3-glucan and beta-1,6-glucan in the cell wall. In Cryptococcus neoformans var. grubii serotype A (strain H99 / ATCC 208821 / CBS 10515 / FGSC 9487) (Filobasidiella neoformans var. grubii), this protein is Glucan organizing enzyme 1.